Consider the following 819-residue polypeptide: Molybdenum cofactor sulfurase (819 aa).

Residue Lys-271 is modified to N6-(pyridoxal phosphate)lysine. Residue Cys-430 is part of the active site. In terms of domain architecture, MOSC spans 650–817; that stretch reads CKLLRYSSST…IGVGEEVNPD (168 aa).

This sequence belongs to the class-V pyridoxal-phosphate-dependent aminotransferase family. MOCOS subfamily. Pyridoxal 5'-phosphate is required as a cofactor. In terms of tissue distribution, ubiquitously expressed.

The catalysed reaction is Mo-molybdopterin + L-cysteine + AH2 = thio-Mo-molybdopterin + L-alanine + A + H2O. It functions in the pathway cofactor biosynthesis; molybdopterin biosynthesis. In terms of biological role, sulfurates the molybdenum cofactor. Sulfation of molybdenum is essential for xanthine dehydrogenase (XDH) and aldehyde oxidase (ADO) enzymes in which molybdenum cofactor is liganded by 1 oxygen and 1 sulfur atom in active form. Modulates cold stress- and osmotic stress-responsive gene expression by acting as key regulator of abscisic acid (ABA) biosynthesis. This is Molybdenum cofactor sulfurase (ABA3) from Arabidopsis thaliana (Mouse-ear cress).